The sequence spans 399 residues: Transcription termination factor 1, mitochondrial (399 aa).

The transit peptide at 1 to 57 (MQSLSLGQTSISKGLNYLTIMAPGNLWHMRNNFLFGSRCWMTRFSAENIFKSVSFRL) directs the protein to the mitochondrion. Interaction with DNA stretches follow at residues 169–170 (RS), 247–251 (QSTKR), 324–331 (AEKKFNDK), 355–358 (SIST), and 384–391 (SKKRYEAK).

The protein belongs to the mTERF family. Monomer. Post-translationally, phosphoprotein with mostly four phosphate groups. While the DNA-binding activity is unaffected by the phosphorylation state, only the phosphorylated form of the protein is active for termination activity. Functioning seems to be regulated by phosphorylation.

The protein localises to the mitochondrion. Transcription termination factor. Binds to a 28 bp region within the tRNA(Leu(uur)) gene at a position immediately adjacent to and downstream of the 16S rRNA gene; this region comprises a tridecamer sequence critical for directing accurate termination. Binds DNA along the major grove and promotes DNA bending and partial unwinding. Promotes base flipping. Transcription termination activity appears to be polarized with highest specificity for transcripts initiated on the light strand. This is Transcription termination factor 1, mitochondrial (MTERF1) from Homo sapiens (Human).